The primary structure comprises 346 residues: Phosphoribosylformylglycinamidine cyclo-ligase (346 aa).

The protein belongs to the AIR synthase family.

Its subcellular location is the cytoplasm. The catalysed reaction is 2-formamido-N(1)-(5-O-phospho-beta-D-ribosyl)acetamidine + ATP = 5-amino-1-(5-phospho-beta-D-ribosyl)imidazole + ADP + phosphate + H(+). The protein operates within purine metabolism; IMP biosynthesis via de novo pathway; 5-amino-1-(5-phospho-D-ribosyl)imidazole from N(2)-formyl-N(1)-(5-phospho-D-ribosyl)glycinamide: step 2/2. This Shewanella pealeana (strain ATCC 700345 / ANG-SQ1) protein is Phosphoribosylformylglycinamidine cyclo-ligase.